The following is a 403-amino-acid chain: Aloesone synthase (403 aa).

Cysteine 174 is an active-site residue. Residues serine 281 and 318 to 321 (GGRA) each bind CoA.

This sequence belongs to the thiolase-like superfamily. Chalcone/stilbene synthases family. As to quaternary structure, homodimer.

It functions in the pathway secondary metabolite biosynthesis; flavonoid biosynthesis. Its function is as follows. Catalyzes the iterative condensations of 6, 7 or 8 molecules of malonyl-CoA to produce various aromatic polyketides. Produces the heptaketide aloesone, the aglycone of aloesin, from 7 molecules of malonyl-CoA as a major product. Also able to produce a hexaketide pyrone, a heptaketide 6-(2-acetyl-3,5-dihydroxybenzyl)-4-hydroxy-2-pyrone, a novel heptaketide 6-(2-(2,4-dihydroxy-6-methylphenyl)-2-oxoethyl)-4-hydroxy-2-pyrone and octaketides SEK4/SEK4b. This Aloe arborescens (Kidachi aloe) protein is Aloesone synthase (PKS3).